We begin with the raw amino-acid sequence, 357 residues long: Transcription factor HHO1 (357 aa).

Disordered regions lie at residues 94 to 117 (TSIEEEVDDKDDDDEEHQSHETDI) and 171 to 198 (NNNIKSPVTTSDGGSGGGGGRRGQRKNR). Residues 96–109 (IEEEVDDKDDDDEE) are compositionally biased toward acidic residues. Over residues 171–182 (NNNIKSPVTTSD) the composition is skewed to polar residues. An HTH myb-type domain is found at 193–253 (GQRKNRRCWS…HLQKYRLHAR (61 aa)). The H-T-H motif DNA-binding region spans 224–249 (PKQIRDIMKVDGLTNDEVKSHLQKYR).

Its subcellular location is the nucleus. Probable factor involved in nitrate and phosphate signaling in roots. Integrates nitrate and phosphate starvation responses and adaptation of root architecture, depending on nutrient availabilities. Acts downstream of the nitrate sensor and transporter NPF6.3/NRT1.1. Represses primary root development in response to phosphate deficiency conditions, only when nitrate is present. This chain is Transcription factor HHO1, found in Arabidopsis thaliana (Mouse-ear cress).